We begin with the raw amino-acid sequence, 439 residues long: Mitochondrial distribution and morphology protein 12 (439 aa).

Positions 1–439 (MSIDINWEAA…VYPSFWTFLV (439 aa)) constitute an SMP-LTD domain. Acidic residues predominate over residues 71-84 (EEDEGDEDFSDDQD). Disordered regions lie at residues 71-104 (EEDE…GTWQ), 182-278 (TPLA…HEKK), and 362-385 (YIPG…RRDD). The span at 212 to 229 (DYPRPVHRQTDTDIDSGH) shows a compositional bias: basic and acidic residues. Polar residues predominate over residues 230-255 (SRPSTADTLNSINSQRISNPALSHPH). Positions 256 to 269 (SSNESHPDTRDHSP) are enriched in basic and acidic residues.

It belongs to the MDM12 family. As to quaternary structure, component of the ER-mitochondria encounter structure (ERMES) or MDM complex, composed of MMM1, MDM10, MDM12 and MDM34. An MMM1 homodimer associates with one molecule of MDM12 on each side in a pairwise head-to-tail manner, and the SMP-LTD domains of MMM1 and MDM12 generate a continuous hydrophobic tunnel for phospholipid trafficking.

It is found in the mitochondrion outer membrane. It localises to the endoplasmic reticulum membrane. In terms of biological role, component of the ERMES/MDM complex, which serves as a molecular tether to connect the endoplasmic reticulum (ER) and mitochondria. Components of this complex are involved in the control of mitochondrial shape and protein biogenesis, and function in nonvesicular lipid trafficking between the ER and mitochondria. MDM12 is required for the interaction of the ER-resident membrane protein MMM1 and the outer mitochondrial membrane-resident beta-barrel protein MDM10. The MDM12-MMM1 subcomplex functions in the major beta-barrel assembly pathway that is responsible for biogenesis of all mitochondrial outer membrane beta-barrel proteins, and acts in a late step after the SAM complex. The MDM10-MDM12-MMM1 subcomplex further acts in the TOM40-specific pathway after the action of the MDM12-MMM1 complex. Essential for establishing and maintaining the structure of mitochondria and maintenance of mtDNA nucleoids. This is Mitochondrial distribution and morphology protein 12 from Uncinocarpus reesii (strain UAMH 1704).